The following is a 207-amino-acid chain: Imidazole glycerol phosphate synthase subunit HisH (207 aa).

The 206-residue stretch at 1–206 (MMIVIDYDAG…KEYVYENTAR (206 aa)) folds into the Glutamine amidotransferase type-1 domain. The active-site Nucleophile is the Cys79. Residues His181 and Glu183 contribute to the active site.

Heterodimer of HisH and HisF.

The protein resides in the cytoplasm. The enzyme catalyses 5-[(5-phospho-1-deoxy-D-ribulos-1-ylimino)methylamino]-1-(5-phospho-beta-D-ribosyl)imidazole-4-carboxamide + L-glutamine = D-erythro-1-(imidazol-4-yl)glycerol 3-phosphate + 5-amino-1-(5-phospho-beta-D-ribosyl)imidazole-4-carboxamide + L-glutamate + H(+). It carries out the reaction L-glutamine + H2O = L-glutamate + NH4(+). The protein operates within amino-acid biosynthesis; L-histidine biosynthesis; L-histidine from 5-phospho-alpha-D-ribose 1-diphosphate: step 5/9. IGPS catalyzes the conversion of PRFAR and glutamine to IGP, AICAR and glutamate. The HisH subunit catalyzes the hydrolysis of glutamine to glutamate and ammonia as part of the synthesis of IGP and AICAR. The resulting ammonia molecule is channeled to the active site of HisF. This Streptococcus sanguinis (strain SK36) protein is Imidazole glycerol phosphate synthase subunit HisH.